The sequence spans 207 residues: Thiamine-phosphate synthase (207 aa).

4-amino-2-methyl-5-(diphosphooxymethyl)pyrimidine contacts are provided by residues 35–39 (QYRDK) and N67. 2 residues coordinate Mg(2+): D68 and D86. T105 lines the 4-amino-2-methyl-5-(diphosphooxymethyl)pyrimidine pocket. A 2-[(2R,5Z)-2-carboxy-4-methylthiazol-5(2H)-ylidene]ethyl phosphate-binding site is contributed by 132–134 (SVT). K135 contributes to the 4-amino-2-methyl-5-(diphosphooxymethyl)pyrimidine binding site. G162 is a binding site for 2-[(2R,5Z)-2-carboxy-4-methylthiazol-5(2H)-ylidene]ethyl phosphate.

This sequence belongs to the thiamine-phosphate synthase family. Mg(2+) is required as a cofactor.

The enzyme catalyses 2-[(2R,5Z)-2-carboxy-4-methylthiazol-5(2H)-ylidene]ethyl phosphate + 4-amino-2-methyl-5-(diphosphooxymethyl)pyrimidine + 2 H(+) = thiamine phosphate + CO2 + diphosphate. It catalyses the reaction 2-(2-carboxy-4-methylthiazol-5-yl)ethyl phosphate + 4-amino-2-methyl-5-(diphosphooxymethyl)pyrimidine + 2 H(+) = thiamine phosphate + CO2 + diphosphate. It carries out the reaction 4-methyl-5-(2-phosphooxyethyl)-thiazole + 4-amino-2-methyl-5-(diphosphooxymethyl)pyrimidine + H(+) = thiamine phosphate + diphosphate. It participates in cofactor biosynthesis; thiamine diphosphate biosynthesis; thiamine phosphate from 4-amino-2-methyl-5-diphosphomethylpyrimidine and 4-methyl-5-(2-phosphoethyl)-thiazole: step 1/1. Functionally, condenses 4-methyl-5-(beta-hydroxyethyl)thiazole monophosphate (THZ-P) and 2-methyl-4-amino-5-hydroxymethyl pyrimidine pyrophosphate (HMP-PP) to form thiamine monophosphate (TMP). In Pseudomonas putida (strain W619), this protein is Thiamine-phosphate synthase.